Consider the following 162-residue polypeptide: Ribosome maturation factor RimP (162 aa).

Belongs to the RimP family.

The protein localises to the cytoplasm. Functionally, required for maturation of 30S ribosomal subunits. The polypeptide is Ribosome maturation factor RimP (Leptospira biflexa serovar Patoc (strain Patoc 1 / Ames)).